Here is a 613-residue protein sequence, read N- to C-terminus: DNA repair and telomere maintenance protein nbs1 (613 aa).

Positions 23–86 (YIVGRNVSDD…FGTKVNEKVV (64 aa)) constitute an FHA domain. BRCT domains are found at residues 107 to 186 (FTIN…YLST) and 228 to 302 (GFSC…KIII). The residue at position 355 (S355) is a Phosphoserine. Disordered stretches follow at residues 381 to 428 (KEPE…GQGK) and 546 to 613 (TEVF…KFHF). Over residues 387-399 (LSNQSNNGSAQNK) the composition is skewed to polar residues. The span at 400 to 409 (KSGDNSEKTK) shows a compositional bias: basic and acidic residues. Residues 574–592 (SSDKSGKSSISKKSSNSFK) are compositionally biased toward low complexity. The FxF/Y motif motif lies at 611-613 (FHF).

The protein belongs to the Nibrin family. In terms of assembly, component of the MRN complex composed of two heterodimers rad32 and rad50 associated with a single nbs1. Interacts with (phosphorylated) ctp1/CtIP. Interacts (via FxF/Y motif) with tel1/atm.

It is found in the nucleus. Its subcellular location is the chromosome. The protein localises to the telomere. Component of the MRN complex, which plays a central role in double-strand break (DSB) repair, DNA recombination, maintenance of telomere integrity and meiosis. The MRN complex is involved in the repair of DNA double-strand breaks (DSBs) via homologous recombination (HR), an error-free mechanism which primarily occurs during S and G2 phases. The complex (1) mediates the end resection of damaged DNA, which generates proper single-stranded DNA, a key initial steps in HR, and is (2) required for the recruitment of other repair factors and efficient activation of tel1/atm upon DNA damage. The MRN complex possesses single-strand endonuclease activity and double-strand-specific 3'-5' exonuclease activity, which are provided by MRE11, to initiate end resection, which is required for single-strand invasion and recombination. Within the MRN complex, nbs1 acts as a protein-protein adapter, which specifically recognizes and binds phosphorylated proteins, promoting their recruitment to DNA damage sites. Recruits rad32 and rad50 components of the MRN complex to DSBs in response to DNA damage. Promotes the recruitment of tel1/atm to the DNA damage sites, activating tel1/atm function. Mediates the recruitment of phosphorylated ctp1/CtIP to DSBs, leading to cooperation between the MRN complex and ctp1/CtIP to initiate end resection. The chain is DNA repair and telomere maintenance protein nbs1 from Schizosaccharomyces pombe (strain 972 / ATCC 24843) (Fission yeast).